A 188-amino-acid polypeptide reads, in one-letter code: Elongation factor P (188 aa).

N6-(3,6-diaminohexanoyl)-5-hydroxylysine is present on lysine 34.

Belongs to the elongation factor P family. May be beta-lysylated on the epsilon-amino group of Lys-34 by the combined action of EpmA and EpmB, and then hydroxylated on the C5 position of the same residue by EpmC (if this protein is present). Lysylation is critical for the stimulatory effect of EF-P on peptide-bond formation. The lysylation moiety may extend toward the peptidyltransferase center and stabilize the terminal 3-CCA end of the tRNA. Hydroxylation of the C5 position on Lys-34 may allow additional potential stabilizing hydrogen-bond interactions with the P-tRNA.

It is found in the cytoplasm. The protein operates within protein biosynthesis; polypeptide chain elongation. Its function is as follows. Involved in peptide bond synthesis. Alleviates ribosome stalling that occurs when 3 or more consecutive Pro residues or the sequence PPG is present in a protein, possibly by augmenting the peptidyl transferase activity of the ribosome. Modification of Lys-34 is required for alleviation. The chain is Elongation factor P from Vibrio atlanticus (strain LGP32) (Vibrio splendidus (strain Mel32)).